Here is a 165-residue protein sequence, read N- to C-terminus: Transcription elongation factor A protein-like 1 (165 aa).

2 disordered regions span residues 1 to 66 and 89 to 124; these read MENS…LLPE and IPME…GDIH. Acidic residues predominate over residues 33 to 60; that stretch reads CSEDDQSSEDLSSEEQSSDEEFFPEELL. The span at 101 to 124 shows a compositional bias: basic and acidic residues; sequence HKLEEGSFKERLARSRPQFRGDIH.

Belongs to the TFS-II family. TFA subfamily.

It is found in the nucleus. Functionally, may be involved in transcriptional regulation. Modulates various viral and cellular promoters in a promoter context-dependent manner. Does not bind DNA directly. This chain is Transcription elongation factor A protein-like 1, found in Rattus norvegicus (Rat).